The sequence spans 70 residues: DNA gyrase inhibitor YacG (70 aa).

Residues Cys21, Cys24, Cys36, and Cys40 each contribute to the Zn(2+) site.

Belongs to the DNA gyrase inhibitor YacG family. Interacts with GyrB. Zn(2+) is required as a cofactor.

In terms of biological role, inhibits all the catalytic activities of DNA gyrase by preventing its interaction with DNA. Acts by binding directly to the C-terminal domain of GyrB, which probably disrupts DNA binding by the gyrase. The protein is DNA gyrase inhibitor YacG of Rhizobium meliloti (strain 1021) (Ensifer meliloti).